Consider the following 182-residue polypeptide: MSGRTVPHAHPATAEYEFANPSRLGEQRFGEGLLPEEILTPTLYHGYYVRPRAARAGEGGRAGASELRLSEGKFQAFLDVSHFTPDEVTVRTVDNLLEVSARHPQRLDRHGFVSREFCRTYVLPADVDPWRVRAALSHDGILNLEAPRGGRHLDTEVNEVYISLLPAPPDPEEEEEVARVEP.

A sHSP domain is found at 55–163 (RAGEGGRAGA…DTEVNEVYIS (109 aa)).

Belongs to the small heat shock protein (HSP20) family. As to quaternary structure, interacts with DMPK; may enhance its kinase activity.

The protein localises to the cytoplasm. Its subcellular location is the nucleus. May regulate the kinase DMPK. The polypeptide is Heat shock protein beta-2 (Hspb2) (Rattus norvegicus (Rat)).